A 362-amino-acid chain; its full sequence is Phosphoserine aminotransferase (362 aa).

L-glutamate contacts are provided by Ser-9 and Arg-42. Pyridoxal 5'-phosphate is bound by residues 76–77 (GR), Trp-102, Thr-153, Asp-174, and Gln-197. Position 198 is an N6-(pyridoxal phosphate)lysine (Lys-198). 239–240 (NT) contacts pyridoxal 5'-phosphate.

It belongs to the class-V pyridoxal-phosphate-dependent aminotransferase family. SerC subfamily. As to quaternary structure, homodimer. The cofactor is pyridoxal 5'-phosphate.

It is found in the cytoplasm. It catalyses the reaction O-phospho-L-serine + 2-oxoglutarate = 3-phosphooxypyruvate + L-glutamate. The enzyme catalyses 4-(phosphooxy)-L-threonine + 2-oxoglutarate = (R)-3-hydroxy-2-oxo-4-phosphooxybutanoate + L-glutamate. It participates in amino-acid biosynthesis; L-serine biosynthesis; L-serine from 3-phospho-D-glycerate: step 2/3. It functions in the pathway cofactor biosynthesis; pyridoxine 5'-phosphate biosynthesis; pyridoxine 5'-phosphate from D-erythrose 4-phosphate: step 3/5. Catalyzes the reversible conversion of 3-phosphohydroxypyruvate to phosphoserine and of 3-hydroxy-2-oxo-4-phosphonooxybutanoate to phosphohydroxythreonine. In Escherichia coli O7:K1 (strain IAI39 / ExPEC), this protein is Phosphoserine aminotransferase.